Reading from the N-terminus, the 150-residue chain is SsrA-binding protein (150 aa).

The segment at 130-150 is disordered; sequence DKRESLKEKDDRREMDRMFKR.

The protein belongs to the SmpB family.

Its subcellular location is the cytoplasm. Functionally, required for rescue of stalled ribosomes mediated by trans-translation. Binds to transfer-messenger RNA (tmRNA), required for stable association of tmRNA with ribosomes. tmRNA and SmpB together mimic tRNA shape, replacing the anticodon stem-loop with SmpB. tmRNA is encoded by the ssrA gene; the 2 termini fold to resemble tRNA(Ala) and it encodes a 'tag peptide', a short internal open reading frame. During trans-translation Ala-aminoacylated tmRNA acts like a tRNA, entering the A-site of stalled ribosomes, displacing the stalled mRNA. The ribosome then switches to translate the ORF on the tmRNA; the nascent peptide is terminated with the 'tag peptide' encoded by the tmRNA and targeted for degradation. The ribosome is freed to recommence translation, which seems to be the essential function of trans-translation. This Phocaeicola vulgatus (strain ATCC 8482 / DSM 1447 / JCM 5826 / CCUG 4940 / NBRC 14291 / NCTC 11154) (Bacteroides vulgatus) protein is SsrA-binding protein.